Reading from the N-terminus, the 140-residue chain is uncharacterized protein (140 aa).

This is an uncharacterized protein from Escherichia coli (strain K12).